The primary structure comprises 79 residues: Putative defensin-like protein 137 (79 aa).

The first 24 residues, 1 to 24, serve as a signal peptide directing secretion; sequence MKKYFQPSFVILIIFTVLVLGVVG. Intrachain disulfides connect Cys-33–Cys-78, Cys-42–Cys-62, Cys-47–Cys-72, and Cys-51–Cys-74.

The protein belongs to the DEFL family.

Its subcellular location is the secreted. In Arabidopsis thaliana (Mouse-ear cress), this protein is Putative defensin-like protein 137 (LCR14).